The primary structure comprises 28 residues: Flagellar filament 34 kDa core protein (28 aa).

Belongs to the bacterial flagellin family. As to quaternary structure, the flagellum consists of an outer layer composed of repeating units of FlaA around a core that contains several antigenically related polypeptides.

It is found in the periplasmic flagellum. The protein localises to the periplasm. Its function is as follows. Component of the core of the flagella. This chain is Flagellar filament 34 kDa core protein, found in Treponema phagedenis.